We begin with the raw amino-acid sequence, 694 residues long: Elongation factor G (694 aa).

The region spanning 8–287 (EDYRNFGIMA…AVVEFLPAPT (280 aa)) is the tr-type G domain. Residues 17–24 (AHIDAGKT), 86–90 (DTPGH), and 140–143 (NKMD) each bind GTP.

Belongs to the TRAFAC class translation factor GTPase superfamily. Classic translation factor GTPase family. EF-G/EF-2 subfamily.

It is found in the cytoplasm. Its function is as follows. Catalyzes the GTP-dependent ribosomal translocation step during translation elongation. During this step, the ribosome changes from the pre-translocational (PRE) to the post-translocational (POST) state as the newly formed A-site-bound peptidyl-tRNA and P-site-bound deacylated tRNA move to the P and E sites, respectively. Catalyzes the coordinated movement of the two tRNA molecules, the mRNA and conformational changes in the ribosome. The protein is Elongation factor G of Brucella abortus (strain S19).